Reading from the N-terminus, the 236-residue chain is Thymidylate kinase (236 aa).

An ATP-binding site is contributed by 9–16; sequence GPEGSGKS.

It belongs to the thymidylate kinase family.

The catalysed reaction is dTMP + ATP = dTDP + ADP. Functionally, phosphorylation of dTMP to form dTDP in both de novo and salvage pathways of dTTP synthesis. This is Thymidylate kinase from Herpetosiphon aurantiacus (strain ATCC 23779 / DSM 785 / 114-95).